The primary structure comprises 365 residues: Centrosomal protein of 41 kDa B (365 aa).

Positions 1 to 14 (MSAKRSIGDPEILK) are enriched in basic and acidic residues. 2 disordered regions span residues 1-23 (MSAK…NQKY) and 104-123 (EFLT…SKSP). Residues 177-274 (EDCPFLLLDV…ISQKFPQGLT (98 aa)) enclose the Rhodanese domain. The tract at residues 329-365 (TSTPSRLRLDSRNSKVPSSASSARSLSSTSSHSKPWK) is disordered. Residues 342–365 (SKVPSSASSARSLSSTSSHSKPWK) show a composition bias toward low complexity.

Belongs to the CEP41 family.

The protein localises to the cytoplasm. The protein resides in the cytoskeleton. It is found in the microtubule organizing center. Its subcellular location is the centrosome. It localises to the cell projection. The protein localises to the cilium. The protein resides in the cilium basal body. Required during ciliogenesis for tubulin glutamylation in cilium. Probably acts by participating in the transport of tubulin polyglutamylases between the basal body and the cilium. This is Centrosomal protein of 41 kDa B (cep41-b) from Xenopus laevis (African clawed frog).